We begin with the raw amino-acid sequence, 399 residues long: Sperm equatorial segment protein 1 (399 aa).

A signal peptide spans 1 to 18 (MKLVVLVALWLWPSSLLA). Asn-128 carries N-linked (GlcNAc...) asparagine glycosylation. The span at 136-145 (EEPFIEKEPE) shows a compositional bias: basic and acidic residues. The segment at 136–250 (EEPFIEKEPE…PSAEDLPGRH (115 aa)) is disordered. The span at 157 to 167 (PEPELEPEPEP) shows a compositional bias: acidic residues. A compositionally biased stretch (polar residues) spans 182–206 (VTSTTPNKELTGTSRISSMATQPAN). The span at 207-225 (TQATRITVTVKTTSTMDVS) shows a compositional bias: low complexity.

It belongs to the SPESP1 family. Glycosylated. In testis there are two predominant forms of 77- and 67-kDa and a form of 47-kDa, whereas in epididymal sperm from caput, corpus, and cauda there are two forms of 47- and 43-kDa. Testis forms contain complex carbohydrate residues. Epididymal sperm forms are N-glycosylated. Then undergoes significant glycosylation in the testis and that the majority of these glycoconjugates are removed by the time sperm reach the caput epididymis. In terms of tissue distribution, testis specific.

It localises to the cytoplasmic vesicle. The protein localises to the secretory vesicle. It is found in the acrosome. Functionally, involved in fertilization ability of sperm. This Mus musculus (Mouse) protein is Sperm equatorial segment protein 1.